A 230-amino-acid polypeptide reads, in one-letter code: Cytidylate kinase (230 aa).

12 to 20 is a binding site for ATP; the sequence is GPSGAGKGT.

It belongs to the cytidylate kinase family. Type 1 subfamily.

The protein localises to the cytoplasm. The enzyme catalyses CMP + ATP = CDP + ADP. It catalyses the reaction dCMP + ATP = dCDP + ADP. In Aeromonas salmonicida (strain A449), this protein is Cytidylate kinase.